The primary structure comprises 1161 residues: Auxin response factor 19 (1161 aa).

The segment at 1 to 20 is disordered; that stretch reads MMKQAQQQPPPPPASSAATT. Positions 154–256 form a DNA-binding region, TF-B3; that stretch reads FCKTLTASDT…QLLLGIRRAN (103 aa). Positions 573–598 are disordered; that stretch reads NQMQQQHASSTQGQQPATSQPLLLPQ. Residues 1027 to 1111 enclose the PB1 domain; that stretch reads RTFTKVYKRG…KCIRILSPQE (85 aa).

It belongs to the ARF family. As to quaternary structure, homodimers and heterodimers. Expressed in roots, culms, leaves and young panicles.

The protein resides in the nucleus. Its function is as follows. Auxin response factors (ARFs) are transcriptional factors that bind specifically to the DNA sequence 5'-TGTCTC-3' found in the auxin-responsive promoter elements (AuxREs). The sequence is that of Auxin response factor 19 (ARF19) from Oryza sativa subsp. japonica (Rice).